Reading from the N-terminus, the 114-residue chain is Iron-sulfur cluster insertion protein ErpA (114 aa).

Residues Cys42, Cys106, and Cys108 each coordinate iron-sulfur cluster.

It belongs to the HesB/IscA family. Homodimer. Requires iron-sulfur cluster as cofactor.

Functionally, required for insertion of 4Fe-4S clusters for at least IspG. The chain is Iron-sulfur cluster insertion protein ErpA from Pasteurella multocida (strain Pm70).